We begin with the raw amino-acid sequence, 601 residues long: MKLSIISAAFLVAITHAASIKFNVIAPNATDVKVSVNGQQVTLTASDANVPYFTGSAEVGASKTYKYVAGGTEESFDRSLDGITNSTLNDFYNRPVTYANLPQLPWPIEKDPQWTRSGSKADIFDDNYIPSVFFHGDDSQVQNVVKNVPADRISGTLTFIGSNYVYSFQNVSFGIHGAGKKHNNAKQSWNWILSGSDTMGNRNFFKLRHMEEDPTQIRERLYSDILHAMGTYANDATMVRLFINNQGFGTFNMLDDITQFSYINAKFYNGKPPATLGPLYDGASGADFLYHPGNLDGYSSWVANTANPNGEAYEALDPLCKAWNETTYTDNTAIANFEKMFDLDRFMRFMVIEYLTADWDGYWMGQTNDGAYRDPTDNNKWYFLDQDFDGTFGVNLAAPEGNAFLDVSYKDFPSRYPGAVMINNLLQNADKKATFEKYLTETVRVLFNNVTLTNRVLALHNFLLPDLEWDRSIVQQSPGINFGWTFDQVTQNLWQGVTAPNNNGGGAAFGLVEYIAAKAQAVAKEFNISIVSQPVGPPSANGTTAAAPAPAAGNSTGKGGNQSISSSASSNKTSAQSTSGASRSKTAPIVLAISALALLVF.

Residues 1–17 (MKLSIISAAFLVAITHA) form the signal peptide. N-linked (GlcNAc...) asparagine glycosylation is found at asparagine 28, asparagine 85, asparagine 170, asparagine 324, asparagine 449, asparagine 527, asparagine 541, asparagine 554, asparagine 561, and asparagine 571. Residues 539–579 (SANGTTAAAPAPAAGNSTGKGGNQSISSSASSNKTSAQSTS) show a composition bias toward low complexity. The segment at 539 to 581 (SANGTTAAAPAPAAGNSTGKGGNQSISSSASSNKTSAQSTSGA) is disordered. Serine 579 is lipidated: GPI-anchor amidated serine. A propeptide spans 580-601 (GASRSKTAPIVLAISALALLVF) (removed in mature form).

Interacts with HSPA5/BiP on the cell surface of host nasal epithelial cells.

The protein localises to the cell membrane. In terms of biological role, promotes invasion of host epithelial cells by adhering to receptors on the host cell surface to facilitate endocytosis of the pathogen into host cells. Binds HSPA5/BiP protein on the cell surface of host nasal epithelial cells. The chain is Invasin CotH3 from Rhizopus delemar (strain RA 99-880 / ATCC MYA-4621 / FGSC 9543 / NRRL 43880) (Mucormycosis agent).